The following is a 792-amino-acid chain: MKFSENWLRSHVPIQATRDELAATLTAIGLEVEEVTPLGESLGQVVVARIVEAVRHPEADRLQVCSVDAGQGELLQIVCGAPNARAGLVAPLALVGAKIGELTITAAKLRGVASNGMLCSAKELGLDSDASGLFELPDDAPVGQALAEYLGLPDASIEIKLTPNRADCFSVRGIAFDVAAACASEVVAFDAGMVAPVSTRTLAVELDAGKDAPRYCGRVIEGIDPSAKTPVWLAERLRRSGVRPVSLLVDITQYVMLELGQPMHAFDLDTLQGPIGVRHSRVGEQLVLLDGRQVTLDESFLTITDAGRPVALAGLMGGLDTRVTDTTRNVFLESAYFAPEAIMGRGRKLGLHTDAGHRFERGVDPALPPQAIEVATRLVLELAGGTPGPVVHAQLPEHLPQPARIRLRRARIARVLGIQIDDADVVRMLRALGMHVEAVAEGWEVMAPSRRFDIAIEEDLIEELARIHGYDRVPTTLPGGASRIAMPSETQLDELSVRRQLVARELQETINYAFVDAALLERWQLTEGLVPLANPLSAELAIMRLRLLPGLVATLGRNAARQAGRVRLFELGKVFAAAADAGAAPGESQHVAAAVCGDALALQWGEPARKVDFHDLKGDLMALAAASGAQLEFQPSTQPFGHPGRSADIYRNGVCIGWIGQVHPRLAKALDIDVDVIAFELQLMPLVQRALPRAGELSRFPSVRRDLAFLVPDEVSWAAVSASVRTTVGPLLREVQLFDRYVGQGVEPGFKSLAMGLILQDNSRTLTDRDVDAVVTDVVAVIEREHRARIRS.

Residues glycine 39–alanine 147 form the tRNA-binding domain. In terms of domain architecture, B5 spans proline 400–threonine 475. Residues aspartate 453, aspartate 459, glutamate 462, and glutamate 463 each coordinate Mg(2+). The FDX-ACB domain maps to serine 698–arginine 791.

The protein belongs to the phenylalanyl-tRNA synthetase beta subunit family. Type 1 subfamily. As to quaternary structure, tetramer of two alpha and two beta subunits. It depends on Mg(2+) as a cofactor.

It localises to the cytoplasm. It carries out the reaction tRNA(Phe) + L-phenylalanine + ATP = L-phenylalanyl-tRNA(Phe) + AMP + diphosphate + H(+). The sequence is that of Phenylalanine--tRNA ligase beta subunit from Xanthomonas euvesicatoria pv. vesicatoria (strain 85-10) (Xanthomonas campestris pv. vesicatoria).